The sequence spans 191 residues: Holliday junction branch migration complex subunit RuvA (191 aa).

The tract at residues 1–64 (MIGRLTGTLA…EDAQLLYGFL (64 aa)) is domain I. A domain II region spans residues 65–138 (TATERATFRQ…KGKLGPDLAL (74 aa)). The interval 138–142 (LPGAV) is flexible linker. Residues 143–191 (IRNEAQSDIVQALIALGYNEREAAAAIKPLPADVGVSDGIKLALRALGK) form a domain III region.

Belongs to the RuvA family. Homotetramer. Forms an RuvA(8)-RuvB(12)-Holliday junction (HJ) complex. HJ DNA is sandwiched between 2 RuvA tetramers; dsDNA enters through RuvA and exits via RuvB. An RuvB hexamer assembles on each DNA strand where it exits the tetramer. Each RuvB hexamer is contacted by two RuvA subunits (via domain III) on 2 adjacent RuvB subunits; this complex drives branch migration. In the full resolvosome a probable DNA-RuvA(4)-RuvB(12)-RuvC(2) complex forms which resolves the HJ.

Its subcellular location is the cytoplasm. Functionally, the RuvA-RuvB-RuvC complex processes Holliday junction (HJ) DNA during genetic recombination and DNA repair, while the RuvA-RuvB complex plays an important role in the rescue of blocked DNA replication forks via replication fork reversal (RFR). RuvA specifically binds to HJ cruciform DNA, conferring on it an open structure. The RuvB hexamer acts as an ATP-dependent pump, pulling dsDNA into and through the RuvAB complex. HJ branch migration allows RuvC to scan DNA until it finds its consensus sequence, where it cleaves and resolves the cruciform DNA. The chain is Holliday junction branch migration complex subunit RuvA from Leptothrix cholodnii (strain ATCC 51168 / LMG 8142 / SP-6) (Leptothrix discophora (strain SP-6)).